The chain runs to 488 residues: Malonate-semialdehyde dehydrogenase 2 (488 aa).

Residues Phe155, Lys179, Glu182, Arg183, and Ser232 each coordinate NAD(+). Cys287 functions as the Nucleophile in the catalytic mechanism. Glu387 serves as a coordination point for NAD(+).

This sequence belongs to the aldehyde dehydrogenase family. IolA subfamily. In terms of assembly, homotetramer.

It catalyses the reaction 3-oxopropanoate + NAD(+) + CoA + H2O = hydrogencarbonate + acetyl-CoA + NADH + H(+). It carries out the reaction 2-methyl-3-oxopropanoate + NAD(+) + CoA + H2O = propanoyl-CoA + hydrogencarbonate + NADH + H(+). Its pathway is polyol metabolism; myo-inositol degradation into acetyl-CoA; acetyl-CoA from myo-inositol: step 7/7. Its function is as follows. Catalyzes the oxidation of malonate semialdehyde (MSA) and methylmalonate semialdehyde (MMSA) into acetyl-CoA and propanoyl-CoA, respectively. Is involved in a myo-inositol catabolic pathway. Bicarbonate, and not CO2, is the end-product of the enzymatic reaction. This is Malonate-semialdehyde dehydrogenase 2 from Bacillus cereus (strain ZK / E33L).